A 1039-amino-acid polypeptide reads, in one-letter code: Serine/threonine-protein kinase Tao (1039 aa).

The 254-residue stretch at 27–280 folds into the Protein kinase domain; the sequence is FEDLREIGHG…SAKLLTHAYV (254 aa). Residues 33–41 and K56 each bind ATP; that span reads IGHGSFGAV. Catalysis depends on D150, which acts as the Proton acceptor. Disordered regions lie at residues 324–457, 485–508, 629–648, and 677–707; these read SAVG…NSAS, GGGG…LADR, HQQD…KKLH, and WKRE…KQHE. A compositionally biased stretch (polar residues) spans 341-350; it reads SSKSNSITSE. The segment covering 359–376 has biased composition (low complexity); the sequence is SAASSQSSSSNSIPAAAQ. The segment covering 377–387 has biased composition (basic residues); it reads NHHHIAAHHHQ. Composition is skewed to low complexity over residues 388 to 397 and 413 to 429; these read QAASAAVAAA and PSGQ…VSRN. The segment covering 444–454 has biased composition (polar residues); the sequence is HSMNNNVTPTN. Over residues 485–500 the composition is skewed to gly residues; sequence GGGGTGTGGSGGGSPA. 2 coiled-coil regions span residues 631 to 765 and 835 to 993; these read QDVE…MLLK and KQFR…DNES. A compositionally biased stretch (basic and acidic residues) spans 677–693; sequence WKRELSMDESTPKRQRD.

The protein belongs to the protein kinase superfamily. STE Ser/Thr protein kinase family. STE20 subfamily. As to quaternary structure, interacts with Schip1; the interaction enhances Tao kinase activity. Requires Mg(2+) as cofactor. Post-translationally, autophosphorylated. As to expression, in the posterior midgut, expressed in almost all intestinal cell types including intestinal stem cells and enterocytes (at protein level). Maternally expressed, ubiquitously distributed in the egg and early embryo and enriched in the germ plasm at the posterior pole of the early embryo including the pole cells.

The protein resides in the cytoplasm. The protein localises to the cytoskeleton. It localises to the spindle. It is found in the membrane. Its subcellular location is the perikaryon. The protein resides in the cell cortex. The protein localises to the cell projection. It localises to the axon. It carries out the reaction L-seryl-[protein] + ATP = O-phospho-L-seryl-[protein] + ADP + H(+). It catalyses the reaction L-threonyl-[protein] + ATP = O-phospho-L-threonyl-[protein] + ADP + H(+). In terms of biological role, serine/threonine-protein kinase which regulates the Hippo/SWH (Sav/Wts/Hpo) signaling pathway, a signaling pathway that plays a pivotal role in organ size control and tumor suppression by restricting proliferation and promoting apoptosis. The core of this pathway is composed of a kinase cascade wherein Hippo (hpo), in complex with its regulatory protein Salvador (sav), phosphorylates and activates Warts (wts) in complex with its regulatory protein Mats, which in turn phosphorylates and inactivates the Yorkie (yki) oncoprotein. In imaginal cells, phosphorylates and activates hpo and leads to repression of yki. In the midgut, negatively regulates the proliferation of intestinal stem cells through the Hippo/SWH pathway. Independent of the hippo/SWH pathway, regulates epithelial morphogenesis in follicle cells by promoting the endocytosis of Fas2 and reducing lateral adhesion between epithelial cells which, in turn, permits shrinking of the lateral membrane and initiates morphogenesis of the squamous epithelium. Required for the development of both the mushroom body and the ellipsoid body in the brain and may act as a negative regulator of the par-1 kinase. Negatively regulates the JNK pathway which increases sensitivity to ethanol exposure. Plays a role in the control of cell shape by negatively regulating the growth of microtubule plus-ends as they contact the actin-rich cell cortex. Required for the induction of apoptosis in pole cells by promoting expression of skl which enhances activity of the apoptosis activator hid. Induces in vitro expression of large, highly dynamic, microtubule-dependent lamellopodia-like cytoplasmic expansions which constantly probe the environment. Its function is as follows. Induces in vitro expression of actin-dependent filopodia-like cytoplasmic protrusions which firmly attach to the substrate. Antagonizes the activity of isoform D. This Drosophila melanogaster (Fruit fly) protein is Serine/threonine-protein kinase Tao.